Here is a 216-residue protein sequence, read N- to C-terminus: Pyridoxine/pyridoxamine 5'-phosphate oxidase 1 (216 aa).

Substrate contacts are provided by residues 10–13 (RREY) and K68. Residues 63–68 (RIVLLK), 78–79 (YT), K85, and Q107 each bind FMN. Y125, R129, and S133 together coordinate substrate. FMN-binding positions include 142-143 (QS) and W186. Position 192–194 (192–194 (RLH)) interacts with substrate. R196 lines the FMN pocket.

This sequence belongs to the pyridoxamine 5'-phosphate oxidase family. Homodimer. FMN is required as a cofactor.

It catalyses the reaction pyridoxamine 5'-phosphate + O2 + H2O = pyridoxal 5'-phosphate + H2O2 + NH4(+). It carries out the reaction pyridoxine 5'-phosphate + O2 = pyridoxal 5'-phosphate + H2O2. Its pathway is cofactor metabolism; pyridoxal 5'-phosphate salvage; pyridoxal 5'-phosphate from pyridoxamine 5'-phosphate: step 1/1. It functions in the pathway cofactor metabolism; pyridoxal 5'-phosphate salvage; pyridoxal 5'-phosphate from pyridoxine 5'-phosphate: step 1/1. Catalyzes the oxidation of either pyridoxine 5'-phosphate (PNP) or pyridoxamine 5'-phosphate (PMP) into pyridoxal 5'-phosphate (PLP). This is Pyridoxine/pyridoxamine 5'-phosphate oxidase 1 from Hydrogenovibrio crunogenus (strain DSM 25203 / XCL-2) (Thiomicrospira crunogena).